A 265-amino-acid polypeptide reads, in one-letter code: Undecaprenyl-diphosphatase (265 aa).

The next 7 helical transmembrane spans lie at 38–58 (RSDF…CLAL), 75–95 (RDYV…GLIV), 108–128 (PVAW…HFAG), 135–155 (VVTW…GVFP), 181–201 (FVFM…LLEM), 215–235 (VAVA…WLLG), and 244–264 (VFAV…PAAA).

This sequence belongs to the UppP family.

It is found in the cell inner membrane. It carries out the reaction di-trans,octa-cis-undecaprenyl diphosphate + H2O = di-trans,octa-cis-undecaprenyl phosphate + phosphate + H(+). Functionally, catalyzes the dephosphorylation of undecaprenyl diphosphate (UPP). Confers resistance to bacitracin. This Xanthomonas euvesicatoria pv. vesicatoria (strain 85-10) (Xanthomonas campestris pv. vesicatoria) protein is Undecaprenyl-diphosphatase.